Consider the following 242-residue polypeptide: 1-(5-phosphoribosyl)-5-[(5-phosphoribosylamino)methylideneamino] imidazole-4-carboxamide isomerase (242 aa).

Asp-8 serves as the catalytic Proton acceptor. The active-site Proton donor is Asp-129.

Belongs to the HisA/HisF family.

It localises to the cytoplasm. The enzyme catalyses 1-(5-phospho-beta-D-ribosyl)-5-[(5-phospho-beta-D-ribosylamino)methylideneamino]imidazole-4-carboxamide = 5-[(5-phospho-1-deoxy-D-ribulos-1-ylimino)methylamino]-1-(5-phospho-beta-D-ribosyl)imidazole-4-carboxamide. The protein operates within amino-acid biosynthesis; L-histidine biosynthesis; L-histidine from 5-phospho-alpha-D-ribose 1-diphosphate: step 4/9. The polypeptide is 1-(5-phosphoribosyl)-5-[(5-phosphoribosylamino)methylideneamino] imidazole-4-carboxamide isomerase (Erythrobacter litoralis (strain HTCC2594)).